Consider the following 271-residue polypeptide: High mobility group protein homolog TDP-1 (271 aa).

The DEK-C domain maps to 8 to 63 (GPLPTDIEETVITIMREEGVRYITAKILRMRLESKYQMEFGPHKAAIDDIVARAMQ). The disordered stretch occupies residues 75-118 (LKEKDASKSSGGKGSKRARSAGAEAPSKTKKEMTEKPKKPADYP). Residues 101–116 (SKTKKEMTEKPKKPAD) show a composition bias toward basic and acidic residues. 2 consecutive DNA-binding regions (HMG box) follow at residues 118 to 186 (PKPA…DEYK) and 206 to 270 (PKRA…AALP).

Its subcellular location is the nucleus. Its function is as follows. Unknown. May play a role in transcription and/or DNA replication. It is not known whether this protein is DNA sequence binding-specific or not. The chain is High mobility group protein homolog TDP-1 from Trypanosoma brucei rhodesiense.